The following is a 168-amino-acid chain: 6,7-dimethyl-8-ribityllumazine synthase (168 aa).

5-amino-6-(D-ribitylamino)uracil is bound by residues F24, 58–60, and 82–84; these read ALE and AVI. A (2S)-2-hydroxy-3-oxobutyl phosphate-binding site is contributed by 87–88; the sequence is ET. Residue H90 is the Proton donor of the active site. Residue N115 participates in 5-amino-6-(D-ribitylamino)uracil binding. R129 is a binding site for (2S)-2-hydroxy-3-oxobutyl phosphate.

This sequence belongs to the DMRL synthase family.

It catalyses the reaction (2S)-2-hydroxy-3-oxobutyl phosphate + 5-amino-6-(D-ribitylamino)uracil = 6,7-dimethyl-8-(1-D-ribityl)lumazine + phosphate + 2 H2O + H(+). It participates in cofactor biosynthesis; riboflavin biosynthesis; riboflavin from 2-hydroxy-3-oxobutyl phosphate and 5-amino-6-(D-ribitylamino)uracil: step 1/2. Catalyzes the formation of 6,7-dimethyl-8-ribityllumazine by condensation of 5-amino-6-(D-ribitylamino)uracil with 3,4-dihydroxy-2-butanone 4-phosphate. This is the penultimate step in the biosynthesis of riboflavin. The sequence is that of 6,7-dimethyl-8-ribityllumazine synthase from Paraburkholderia phytofirmans (strain DSM 17436 / LMG 22146 / PsJN) (Burkholderia phytofirmans).